Reading from the N-terminus, the 463-residue chain is L-seryl-tRNA(Sec) selenium transferase (463 aa).

At Lys295 the chain carries N6-(pyridoxal phosphate)lysine.

Belongs to the SelA family. In terms of assembly, homodecamer; pentamer of dimers. Binds only one seryl-tRNA(Sec) per dimer. Requires pyridoxal 5'-phosphate as cofactor.

It is found in the cytoplasm. It carries out the reaction L-seryl-tRNA(Sec) + selenophosphate + H(+) = L-selenocysteinyl-tRNA(Sec) + phosphate. The protein operates within aminoacyl-tRNA biosynthesis; selenocysteinyl-tRNA(Sec) biosynthesis; selenocysteinyl-tRNA(Sec) from L-seryl-tRNA(Sec) (bacterial route): step 1/1. Converts seryl-tRNA(Sec) to selenocysteinyl-tRNA(Sec) required for selenoprotein biosynthesis. This chain is L-seryl-tRNA(Sec) selenium transferase, found in Escherichia coli O127:H6 (strain E2348/69 / EPEC).